The following is a 293-amino-acid chain: Ribosomal protein L11 methyltransferase (293 aa).

Residues threonine 145, glycine 166, aspartate 188, and asparagine 230 each contribute to the S-adenosyl-L-methionine site.

The protein belongs to the methyltransferase superfamily. PrmA family.

The protein resides in the cytoplasm. It catalyses the reaction L-lysyl-[protein] + 3 S-adenosyl-L-methionine = N(6),N(6),N(6)-trimethyl-L-lysyl-[protein] + 3 S-adenosyl-L-homocysteine + 3 H(+). Methylates ribosomal protein L11. This chain is Ribosomal protein L11 methyltransferase, found in Shigella sonnei (strain Ss046).